The primary structure comprises 565 residues: CTP synthase (565 aa).

The amidoligase domain stretch occupies residues 1–272; sequence MARPKNVKHI…DLRVMKKLGL (272 aa). Ser18 is a binding site for CTP. Ser18 provides a ligand contact to UTP. Residue 19 to 24 participates in ATP binding; it reads SLGKGI. Tyr59 serves as a coordination point for L-glutamine. Asp76 contacts ATP. Asp76 and Glu146 together coordinate Mg(2+). CTP-binding positions include 153 to 155, 193 to 198, and Lys229; these read DIE and KTKPTQ. UTP contacts are provided by residues 193–198 and Lys229; that span reads KTKPTQ. In terms of domain architecture, Glutamine amidotransferase type-1 spans 299-543; sequence TIGVCGKYTE…VAAAKEYEKG (245 aa). An L-glutamine-binding site is contributed by Gly363. The Nucleophile; for glutamine hydrolysis role is filled by Cys390. L-glutamine is bound by residues 391 to 394, Glu414, and Arg471; that span reads LGMQ. Residues His516 and Glu518 contribute to the active site.

It belongs to the CTP synthase family. Homotetramer.

It carries out the reaction UTP + L-glutamine + ATP + H2O = CTP + L-glutamate + ADP + phosphate + 2 H(+). It catalyses the reaction L-glutamine + H2O = L-glutamate + NH4(+). The catalysed reaction is UTP + NH4(+) + ATP = CTP + ADP + phosphate + 2 H(+). It participates in pyrimidine metabolism; CTP biosynthesis via de novo pathway; CTP from UDP: step 2/2. Its activity is regulated as follows. Allosterically activated by GTP, when glutamine is the substrate; GTP has no effect on the reaction when ammonia is the substrate. The allosteric effector GTP functions by stabilizing the protein conformation that binds the tetrahedral intermediate(s) formed during glutamine hydrolysis. Inhibited by the product CTP, via allosteric rather than competitive inhibition. Catalyzes the ATP-dependent amination of UTP to CTP with either L-glutamine or ammonia as the source of nitrogen. Regulates intracellular CTP levels through interactions with the four ribonucleotide triphosphates. The sequence is that of CTP synthase from Chlorobium phaeobacteroides (strain DSM 266 / SMG 266 / 2430).